The sequence spans 639 residues: 3-oxocholoyl-CoA 4-desaturase (639 aa).

Q101 provides a ligand contact to FMN. 155–158 lines the substrate pocket; the sequence is HAAH. Catalysis depends on Y160, which acts as the Proton donor. FMN is bound by residues R208, R286, and 308-309; that span reads GR. Residues C332 and C335 each coordinate [4Fe-4S] cluster. Q337 contributes to the FAD binding site. [4Fe-4S] cluster is bound by residues C339 and C353. 5 residues coordinate FAD: A383, E402, Q410, K420, and V447.

In the N-terminal section; belongs to the NADH:flavin oxidoreductase/NADH oxidase family. FMN is required as a cofactor. It depends on FAD as a cofactor. The cofactor is [4Fe-4S] cluster.

The catalysed reaction is 7alpha,12alpha-dihydroxy-3-oxochol-24-oyl-CoA + NAD(+) = 7alpha,12alpha-dihydroxy-3-oxochol-4-en-24-oyl-CoA + NADH + H(+). It catalyses the reaction 7alpha-hydroxy-3-oxochol-24-oyl-CoA + NAD(+) = 7alpha-hydroxy-3-oxochol-4-en-24-oyl-CoA + NADH + H(+). Its pathway is lipid metabolism; bile acid degradation. Its function is as follows. Stereo-specific NAD(H)-dependent 3-oxo-delta4-cholenoic acid oxidoreductase involved in bile acid 7alpha-dehydroxylation. The chain is 3-oxocholoyl-CoA 4-desaturase from Clostridium scindens (strain JCM 10418 / VPI 12708).